A 158-amino-acid chain; its full sequence is Secreted RxLR effector protein 2 (158 aa).

The signal sequence occupies residues 1–21 (MRLLLWVLLVTLVTFLSSGDA). Positions 54–75 (RFLRGDRSNIVNLKDGDENEER) match the RxLR-dEER motif.

Belongs to the RxLR effector family.

It localises to the secreted. Its subcellular location is the host cell. In terms of biological role, secreted effector that completely suppresses elicitor-induced cell death in host and enhances virulence of P.parasitica. The polypeptide is Secreted RxLR effector protein 2 (Phytophthora nicotianae (Potato buckeye rot agent)).